The chain runs to 474 residues: MGRKKIQITRIMDERNRQVTFTKRKFGLMKKAYELSVLCDCEIALIIFNSTNKLFQYASTDMDKVLLKYTEYNEPHESRTNSDIVETLRKKGLNGCDSPDPDADDSVGHSPESEDKYRKINEDIDLMISRQRLCAVPPPSFEMPVTIPVSSHNSLVYSNPVSTLGNPNLLPLAHPSLQRNSMSPGVTHRPPSAGNTGGLMGGDLTSGAGTSAGNGYGNPRNSPGLLVSPGNLNKNIQAKSPPPMNLGMNNRKPDLRVLIPPGSKNTMPSVSEDVDLLLNQRINNSQSAQSLATPVVSVATPTLPGQGMGGYPSAISTTYGTEYSLSSADLSSLSGFNTASALHLGSVTGWQQQHLHNMPPSALSQLGACTSTHLSQSSNLSLPSTQSLSIKSEPVSPPRDRTTTPSRYPQHTTRHEAGRSPVDSLSSCSSSYDGSDREDHRNEFHSPIGLTRPSPDERESPSVKRMRLSEGWAT.

The 55-residue stretch at 3 to 57 (RKKIQITRIMDERNRQVTFTKRKFGLMKKAYELSVLCDCEIALIIFNSTNKLFQY) folds into the MADS-box domain. N6-acetyllysine is present on K4. The segment at residues 58–86 (ASTDMDKVLLKYTEYNEPHESRTNSDIVE) is a DNA-binding region (mef2-type). Position 59 is a phosphoserine; by CK2 (S59). The segment at 91 to 118 (KGLNGCDSPDPDADDSVGHSPESEDKYR) is disordered. Residues S98 and S106 each carry the phosphoserine modification. Residue G108 is modified to Phosphothreonine. S110 carries the phosphoserine modification. N6-acetyllysine is present on residues K116 and K119. Phosphoserine is present on residues S222 and S228. K234 and K239 each carry N6-acetyllysine. Residue S240 is modified to Phosphoserine. N6-acetyllysine is present on residues K252 and K264. The tract at residues 271 to 278 (SEDVDLLL) is beta domain. Residues T293 and T300 each carry the phosphothreonine; by MAPK14 modification. The transcription repressor stretch occupies residues 368–399 (ACTSTHLSQSSNLSLPSTQSLSIKSEPVSPPR). A compositionally biased stretch (polar residues) spans 375–390 (SQSSNLSLPSTQSLSI). The tract at residues 375 to 474 (SQSSNLSLPS…RMRLSEGWAT (100 aa)) is disordered. K391 participates in a covalent cross-link: Glycyl lysine isopeptide (Lys-Gly) (interchain with G-Cter in SUMO). Phosphoserine; by CDK5 is present on S396. S420 is subject to Phosphoserine; by MAPK7. A compositionally biased stretch (low complexity) spans 420-433 (SPVDSLSSCSSSYD). Positions 434–444 (GSDREDHRNEF) are enriched in basic and acidic residues. A Phosphoserine modification is found at S446.

The protein belongs to the MEF2 family. In terms of assembly, forms a complex with class II HDACs in undifferentiating cells. On myogenic differentiation, HDACs are released into the cytoplasm allowing MEF2s to interact with other proteins for activation. Interacts with EP300 in differentiating cells; the interaction acetylates MEF2C leading to increased DNA binding and activation. Interacts with HDAC7 and CARM1. Interacts with HDAC4, HDAC7 AND HDAC9; the interaction with HDACs represses transcriptional activity. Interacts with LPIN1. Interacts with MYOCD. Interacts with AKAP13. Interacts with FOXK1; the interaction inhibits MEF2C transactivation activity. Interacts (via N-terminus) with HABP4; this interaction decreases DNA-binding activity of MEF2C in myocardial cells in response to mechanical stress. Interacts with JPH2; interaction specifically takes place with the Junctophilin-2 N-terminal fragment cleavage product of JPH2. Interacts (via MADS box) with SOX18. Interacts with PHF7; the interaction promotes MEF2C binding to its transcription targets. Post-translationally, phosphorylation on Ser-59 enhances DNA binding activity. Phosphorylation on Ser-396 is required for Lys-391 sumoylation and inhibits transcriptional activity. In terms of processing, acetylated by p300 on several sites in diffentiating myocytes. Acetylation on Lys-4 increases DNA binding and transactivation. Sumoylated on Lys-391 with SUMO2 but not by SUMO1 represses transcriptional activity. Post-translationally, proteolytically cleaved in cerebellar granule neurons, probably by caspase 7, following neurotoxicity. Preferentially cleaves the CDK5-mediated hyperphosphorylated form which leads to neuron apoptosis and transcriptional inactivation. Widely expressed though mainly restricted to skeletal and cardiac muscle, brain, neurons and lymphocytes. Beta domain-lacking isoforms are the most predominantly expressed in all tissues including skeletal and cardiac muscle and brain. Only brain expresses all isoforms. Expression occurs primarily in the internal granule cell layer of the olfactory bulb, cortex, thalamus, hippocampus and cerebellum. Low levels in the cerebellum and hindbrain. Expressed throughout the cortex, including the frontal and entorhinal cortex, dentate gyrus, and basolateral amygdala. Selectively expressed in B-cells but not in T-cells, and its expression increases as B-cells mature.

The protein resides in the nucleus. It localises to the cytoplasm. Its subcellular location is the sarcoplasm. In terms of biological role, transcription activator which binds specifically to the MEF2 element present in the regulatory regions of many muscle-specific genes. Controls cardiac morphogenesis and myogenesis, and is also involved in vascular development. Enhances transcriptional activation mediated by SOX18. May also be involved in neurogenesis and in the development of cortical architecture. Isoforms that lack the repressor domain are more active than isoform 1. Plays an essential role in hippocampal-dependent learning and memory by suppressing the number of excitatory synapses and thus regulating basal and evoked synaptic transmission. Crucial for normal neuronal development, distribution, and electrical activity in the neocortex. Necessary for proper development of megakaryocytes and platelets and for bone marrow B-lymphopoiesis. Required for B-cell survival and proliferation in response to BCR stimulation, efficient IgG1 antibody responses to T-cell-dependent antigens and for normal induction of germinal center B-cells. This chain is Myocyte-specific enhancer factor 2C, found in Mus musculus (Mouse).